The following is a 794-amino-acid chain: Lon protease (794 aa).

The Lon N-terminal domain maps to 13–204 (VPLYPLREII…KVYMHLTNEV (192 aa)). 356–363 (GPPGVGKT) provides a ligand contact to ATP. Residues 592–773 (KDRVGVATGL…REVFVQALNP (182 aa)) enclose the Lon proteolytic domain. Residues serine 679 and lysine 722 contribute to the active site. Over residues 774 to 788 (TSPAPTAATSARTPA) the composition is skewed to low complexity. The segment at 774–794 (TSPAPTAATSARTPAGAPPPQ) is disordered.

Belongs to the peptidase S16 family. In terms of assembly, homohexamer. Organized in a ring with a central cavity.

The protein resides in the cytoplasm. It catalyses the reaction Hydrolysis of proteins in presence of ATP.. Its function is as follows. ATP-dependent serine protease that mediates the selective degradation of mutant and abnormal proteins as well as certain short-lived regulatory proteins. Required for cellular homeostasis and for survival from DNA damage and developmental changes induced by stress. Degrades polypeptides processively to yield small peptide fragments that are 5 to 10 amino acids long. Binds to DNA in a double-stranded, site-specific manner. The polypeptide is Lon protease (Citrifermentans bemidjiense (strain ATCC BAA-1014 / DSM 16622 / JCM 12645 / Bem) (Geobacter bemidjiensis)).